The sequence spans 459 residues: Cysteine--tRNA ligase (459 aa).

Cysteine 31 serves as a coordination point for Zn(2+). Positions proline 33–asparagine 43 match the 'HIGH' region motif. Cysteine 216, histidine 241, and glutamate 245 together coordinate Zn(2+). A 'KMSKS' region motif is present at residues lysine 274 to serine 278. Lysine 277 is an ATP binding site.

The protein belongs to the class-I aminoacyl-tRNA synthetase family. Monomer. Zn(2+) is required as a cofactor.

The protein resides in the cytoplasm. It carries out the reaction tRNA(Cys) + L-cysteine + ATP = L-cysteinyl-tRNA(Cys) + AMP + diphosphate. This chain is Cysteine--tRNA ligase, found in Rickettsia rickettsii (strain Iowa).